A 453-amino-acid chain; its full sequence is L-cysteine:1D-myo-inositol 2-amino-2-deoxy-alpha-D-glucopyranoside ligase (453 aa).

Cys58 contacts Zn(2+). L-cysteinyl-5'-AMP contacts are provided by residues 58–61 (CGIT), Thr73, and 96–98 (NVT). The 'HIGH' region signature appears at 60–70 (ITPYDATHMGH). A 'ERGGDP' region motif is present at residues 221–226 (ERGGDP). Trp262 is an L-cysteinyl-5'-AMP binding site. Cys266 lines the Zn(2+) pocket. Residue 284-286 (GND) coordinates L-cysteinyl-5'-AMP. His291 lines the Zn(2+) pocket. Val317 is a binding site for L-cysteinyl-5'-AMP. The 'KMSKS' region signature appears at 323-327 (KMSKS).

It belongs to the class-I aminoacyl-tRNA synthetase family. MshC subfamily. In terms of assembly, monomer. It depends on Zn(2+) as a cofactor.

It carries out the reaction 1D-myo-inositol 2-amino-2-deoxy-alpha-D-glucopyranoside + L-cysteine + ATP = 1D-myo-inositol 2-(L-cysteinylamino)-2-deoxy-alpha-D-glucopyranoside + AMP + diphosphate + H(+). Catalyzes the ATP-dependent condensation of GlcN-Ins and L-cysteine to form L-Cys-GlcN-Ins. The protein is L-cysteine:1D-myo-inositol 2-amino-2-deoxy-alpha-D-glucopyranoside ligase of Rothia mucilaginosa (strain DY-18) (Stomatococcus mucilaginosus).